The primary structure comprises 1141 residues: MAYPVKVGARERWTFAKIKETLELPNLIEIQRNSYQWFIDTGLRELFHDISPIQDFTGNLILQFVDYSLGEPKYSEDECKERDMTYAAPLRVKVRLINRETGEVKEQEVFMGDFPLMTDKGTFIINGAERVIVSQLVRSPGAYYAEGIDASGTKVYGATVIPNRGAWLEFETDNTESIYVRIDRTRKIPVTILLRALGYNTNARILELFDYDGRIQNTLEKDNTESEEEALVEIYKRLRPGEPPTVDSARNLLESLFFDPRRYDLGNVGRYKLHKKFNHGILTREVDGREEYIRTLTKEDIIYTIKYLLRLMDGEVKPDDIDHLGNRRLRSVGELLQNQFRIGLARMERVVRERMTIQDVDVITPQVLINIRPVVAAIKEFFGSSQLSQFMDQTNPLAELTHKRRLSALGPGGLSRERAGFEVRDVHTSHYGRMCPIETPEGPNIGLIGSLSTYARINEFGFIETPYRRVDKEKGIVTNQVDYLTADEEDKYFIAQANAPLDEEGHFLEKRVNARHGGEILVVPASQVDYMDVSPKQMVSVATALIPFLEHDDANRALMGANMQRQAVPLLRTEAPIVGTGMEWRAARDSGTVVLARNNGVVERVTAREIVIRTDNGHLETYRLQKFVRSNQGTCINQKPIVRKGERVSAGQTIADGPSTDQGELALGRNILVAFMTWEGYNYEDAILISEKLVKDDIFTSIHIEEYECDARDTKLGPEEITRDIPNVSEDVLKDLDERGIIRIGAEVRPGDILVGKVTPKGETELTAEERLLRAIFGEKAREVRDTSLRVPHGESGIVVDVKVFSRENGDELAPGVNELVRVYIAQKRKISVGDKMAGRHGNKGVISRILPEEDMPFLPDGTPIEIVLNPLGVPSRMNLGQILETHLGRAARALGITVATPVFDGATEEEIKEAFRKAGLPEDGKTILYDGRTGEPFDRPITVGYMYMLKLAHLVDDKIHARSTGPYSLVTQQPLGGKAQFGGQRFGEMEVWALEAYGAAYTLQEILTVKSDDVVGRVKTYEAIVKGENVPEPGVPESFKVLIKELQSLGLDVKVLSEENEEIEIKEDDDDVSESAQELGLDVHGQPNTAPESEGGNEEDKEAEADEDFDPADLDPSELELDADLNDDLVVPDEAYGDEE.

Composition is skewed to acidic residues over residues Glu1063–Ser1074 and Gly1096–Glu1141. The segment at Glu1063 to Glu1141 is disordered.

This sequence belongs to the RNA polymerase beta chain family. The RNAP catalytic core consists of 2 alpha, 1 beta, 1 beta' and 1 omega subunit. When a sigma factor is associated with the core the holoenzyme is formed, which can initiate transcription.

The catalysed reaction is RNA(n) + a ribonucleoside 5'-triphosphate = RNA(n+1) + diphosphate. DNA-dependent RNA polymerase catalyzes the transcription of DNA into RNA using the four ribonucleoside triphosphates as substrates. This Moorella thermoacetica (strain ATCC 39073 / JCM 9320) protein is DNA-directed RNA polymerase subunit beta.